Here is a 477-residue protein sequence, read N- to C-terminus: Glycogen synthase (477 aa).

K15 lines the ADP-alpha-D-glucose pocket.

It belongs to the glycosyltransferase 1 family. Bacterial/plant glycogen synthase subfamily.

It catalyses the reaction [(1-&gt;4)-alpha-D-glucosyl](n) + ADP-alpha-D-glucose = [(1-&gt;4)-alpha-D-glucosyl](n+1) + ADP + H(+). It participates in glycan biosynthesis; glycogen biosynthesis. Synthesizes alpha-1,4-glucan chains using ADP-glucose. The polypeptide is Glycogen synthase (Citrobacter koseri (strain ATCC BAA-895 / CDC 4225-83 / SGSC4696)).